The chain runs to 242 residues: Zinc import ATP-binding protein ZnuC (242 aa).

In terms of domain architecture, ABC transporter spans 24–241; it reads INVKNLSFFY…EKFLKMFSSY (218 aa). Position 56-63 (56-63) interacts with ATP; sequence GPNGGGKT.

This sequence belongs to the ABC transporter superfamily. Zinc importer (TC 3.A.1.15.5) family. The complex is composed of two ATP-binding proteins (ZnuC), two transmembrane proteins (ZnuB) and a solute-binding protein (ZnuA).

The protein localises to the cell inner membrane. The catalysed reaction is Zn(2+)(out) + ATP(in) + H2O(in) = Zn(2+)(in) + ADP(in) + phosphate(in) + H(+)(in). Functionally, part of the ABC transporter complex ZnuABC involved in zinc import. Responsible for energy coupling to the transport system. The sequence is that of Zinc import ATP-binding protein ZnuC from Ehrlichia canis (strain Jake).